The sequence spans 256 residues: NAD-dependent protein deacylase 2 (256 aa).

Positions 1-256 (MDSHSPIATV…MPQVVSHIYR (256 aa)) constitute a Deacetylase sirtuin-type domain. Residues 25 to 44 (GAGL…GGLY) and 108 to 111 (QNID) each bind NAD(+). The Proton acceptor role is filled by histidine 128. Zn(2+) contacts are provided by cysteine 136, cysteine 139, cysteine 158, and cysteine 161. NAD(+) is bound by residues 199-201 (GTT), 225-227 (NPG), and alanine 243.

Belongs to the sirtuin family. Class III subfamily. The cofactor is Zn(2+).

The protein localises to the cytoplasm. It catalyses the reaction N(6)-acetyl-L-lysyl-[protein] + NAD(+) + H2O = 2''-O-acetyl-ADP-D-ribose + nicotinamide + L-lysyl-[protein]. Its function is as follows. NAD-dependent protein deacetylase which modulates the activities of several proteins which are inactive in their acetylated form. The sequence is that of NAD-dependent protein deacylase 2 (cobB2) from Pseudomonas aeruginosa (strain ATCC 15692 / DSM 22644 / CIP 104116 / JCM 14847 / LMG 12228 / 1C / PRS 101 / PAO1).